The chain runs to 130 residues: Large ribosomal subunit protein bL17 (130 aa).

It belongs to the bacterial ribosomal protein bL17 family. As to quaternary structure, part of the 50S ribosomal subunit. Contacts protein L32.

This Azotobacter vinelandii (strain DJ / ATCC BAA-1303) protein is Large ribosomal subunit protein bL17.